Reading from the N-terminus, the 299-residue chain is NAD kinase (299 aa).

The Proton acceptor role is filled by Asp-78. NAD(+) is bound by residues 78–79, 151–152, Lys-162, Arg-179, Asp-181, 192–197, and Gln-252; these read DG, ND, and TAYALS.

Belongs to the NAD kinase family. It depends on a divalent metal cation as a cofactor.

Its subcellular location is the cytoplasm. The catalysed reaction is NAD(+) + ATP = ADP + NADP(+) + H(+). In terms of biological role, involved in the regulation of the intracellular balance of NAD and NADP, and is a key enzyme in the biosynthesis of NADP. Catalyzes specifically the phosphorylation on 2'-hydroxyl of the adenosine moiety of NAD to yield NADP. This chain is NAD kinase, found in Coxiella burnetii (strain CbuG_Q212) (Coxiella burnetii (strain Q212)).